A 662-amino-acid polypeptide reads, in one-letter code: MTAQDSIPSLEQLVQQKRVKEEKAARPKFLSKAERARLALERRQKEVEEAKAKQNDKLLDLRKRTFTNHLENNELADDEKKSQVSSVSSNNSGTESSATDEAFSMTIRQRYMGIKPPVVKKRRRNADKKFVFDWDATDDTMKDAETSASPEATIAVFGRGKLGGFDDQSIRKAKSNSGLIQRLLQGTEQDKARAHELIQLQEKRAKKIDWDDVPWREKPLEAMKPRDWRILKEDYNISIKGDDLPNPLRNWEEAGLPSEMLKVLKKVNYKEPSSIQRAAIPVLLQRKDLIGIAETGSGKTAAFIIPLIIAISKLPPLTESNMHLGPYAVVLAPTRELAQQIQVEGNKFAEPLGFRCVSVVGGHAFEEQSFQMSQGAHIVVATPGRLLDCLERRLFVLSQCTYVVMDEADRMLDMGFEDDVNKILSSLPSSNASEKDGSILATANSSSSRRQTIMFSATLPPRVANLAKSYLIEPVMLTIGNIGQAVDRVEQRVEMISDDSKKWRRVEEILESNRFSPPIIIFVNLKRNIEAIAKQLNAIGWHAVTLHGSKSQEQRERAIEQLRNKTADILVATDIAGRGIDIPNVSLVLNYNMAKSIEDYTHRIGRTGRAGKSGTAITFLGPEDTDVYYDLRVLLSRSAKAHIPDELRNHEAAFVRHAAITQ.

Residues 70–101 (LENNELADDEKKSQVSSVSSNNSGTESSATDE) are disordered. The span at 83–97 (QVSSVSSNNSGTESS) shows a compositional bias: low complexity. Positions 249–277 (RNWEEAGLPSEMLKVLKKVNYKEPSSIQR) match the Q motif motif. The Helicase ATP-binding domain occupies 280-477 (IPVLLQRKDL…KSYLIEPVML (198 aa)). 293–300 (AETGSGKT) contributes to the ATP binding site. The DEAD box motif lies at 406–409 (DEAD). Residues 488 to 651 (RVEQRVEMIS…HIPDELRNHE (164 aa)) enclose the Helicase C-terminal domain.

Belongs to the DEAD box helicase family. DDX23/PRP28 subfamily. In terms of assembly, component of the U5 snRNP complex.

Its subcellular location is the cytoplasm. It is found in the nucleus. It carries out the reaction ATP + H2O = ADP + phosphate + H(+). Functionally, ATP-dependent RNA helicase involved in mRNA splicing. May destabilize the U1/5'-splice site duplex to permit an effective competition for the 5'-splice site by the U6 snRNA, resulting in the switch between U1 and U6 at the 5'-splice site. May also act to unwind the U4/U6 base-pairing interaction in the U4/U6/U5 snRNP, facilitating the first covalent step of splicing. This is Pre-mRNA-splicing ATP-dependent RNA helicase prp28 (prp28) from Schizosaccharomyces pombe (strain 972 / ATCC 24843) (Fission yeast).